The chain runs to 239 residues: Tetraspanin-9 (239 aa).

The Cytoplasmic portion of the chain corresponds to 1-13 (MARGCLCCVKYMM). The chain crosses the membrane as a helical span at residues 14–34 (FLFNLLFWLSGCGLLGVGIWL). The Extracellular portion of the chain corresponds to 35–55 (SVSQGSFATFSPSFPSLSAAN). A helical transmembrane segment spans residues 56–76 (LVITLGSVVMVTGFLGCLGAI). Residues 77–85 (KENKCLLLS) are Cytoplasmic-facing. A helical transmembrane segment spans residues 86–106 (FFIVLLIILLAELILLILFFV). The Extracellular portion of the chain corresponds to 107 to 203 (YTEKVSENAK…VEEWLNDNKH (97 aa)). Asn180 is a glycosylation site (N-linked (GlcNAc...) asparagine). Residues 204–224 (LLGTIAMCVLVLQLLGMAFSM) traverse the membrane as a helical segment. The Cytoplasmic segment spans residues 225–239 (TLYQQIHRAGKKYDA).

It belongs to the tetraspanin (TM4SF) family.

The protein resides in the membrane. This is Tetraspanin-9 (tspan9) from Danio rerio (Zebrafish).